The following is a 284-amino-acid chain: Nucleotide-binding protein Sden_0486 (284 aa).

8–15 lines the ATP pocket; sequence GRSGSGKS. 56–59 is a binding site for GTP; the sequence is DVRN.

It belongs to the RapZ-like family.

Functionally, displays ATPase and GTPase activities. The sequence is that of Nucleotide-binding protein Sden_0486 from Shewanella denitrificans (strain OS217 / ATCC BAA-1090 / DSM 15013).